A 666-amino-acid polypeptide reads, in one-letter code: Nuclear distribution protein nudE homolog 1 (666 aa).

Residues E14–T195 adopt a coiled-coil conformation. Disordered regions lie at residues E40 to A64, D220 to P310, K369 to H388, and D397 to K666. Residues R251–H274 show a composition bias toward polar residues. Composition is skewed to low complexity over residues S275–S287 and T372–T383. The segment covering T400–P410 has biased composition (polar residues). 3 stretches are compositionally biased toward low complexity: residues P449 to R465, A473 to A485, and S536 to N554. Polar residues-rich tracts occupy residues R587–T599 and S614–P638.

The protein belongs to the nudE family. In terms of assembly, self-associates. Interacts with PAC1.

Its subcellular location is the cytoplasm. It is found in the cytoskeleton. Its function is as follows. Required for nuclear migration. The chain is Nuclear distribution protein nudE homolog 1 (NDE1) from Cryptococcus neoformans var. neoformans serotype D (strain JEC21 / ATCC MYA-565) (Filobasidiella neoformans).